We begin with the raw amino-acid sequence, 113 residues long: uncharacterized protein (113 aa).

One can recognise an HTH hxlR-type domain in the interval 16-113 (TPFGYTLSLI…CEWGVKNQNN (98 aa)).

This is an uncharacterized protein from Halalkalibacterium halodurans (strain ATCC BAA-125 / DSM 18197 / FERM 7344 / JCM 9153 / C-125) (Bacillus halodurans).